The chain runs to 293 residues: Probable adenylate kinase 1, chloroplastic (293 aa).

The transit peptide at 1–26 directs the protein to the mitochondrion; the sequence is MAAVQRLLRASASGGAAAAAAAARRR. 70–75 contributes to the ATP binding site; that stretch reads GVGKGT. The NMP stretch occupies residues 90–119; it reads ATGDLVRDELASSGPLSVQLAEIVNQGKLV. Residues Thr91, Arg96, 117 to 119, 147 to 150, and Gln154 contribute to the AMP site; these read KLV and GFPR. The LID stretch occupies residues 183–231; the sequence is GRRICGQCGKNFNLACIDVKGENGLPPIYMAPLLPPNNCMSKLITRADD. Residues Arg184 and 193-194 each bind ATP; that span reads NF. The AMP site is built by Arg228 and Arg239.

This sequence belongs to the adenylate kinase family.

The protein localises to the mitochondrion. It carries out the reaction AMP + ATP = 2 ADP. Catalyzes the reversible transfer of the terminal phosphate group between ATP and AMP. Plays an important role in cellular energy homeostasis and in adenine nucleotide metabolism. This Oryza sativa subsp. japonica (Rice) protein is Probable adenylate kinase 1, chloroplastic.